The following is a 301-amino-acid chain: Cytosolic sulfotransferase 2 (301 aa).

53–58 (KAGTTW) contributes to the 3'-phosphoadenylyl sulfate binding site. His115 (proton acceptor) is an active-site residue. Residues Arg137, Ser145, Tyr201, 235–240 (VQFDVM), and 263–265 (RKG) each bind 3'-phosphoadenylyl sulfate.

This sequence belongs to the sulfotransferase 1 family. Expressed in liver.

Its subcellular location is the cytoplasm. Its activity is regulated as follows. Inhibited by Co(2+), Zn(2+), Cd(2+) and Pb(2+) ions. Inactivated by Hg(2+) and Cu(2+) ions. Functionally, sulfotransferase that utilizes 3'-phospho-5'-adenylyl sulfate (PAPS) as sulfonate donor to catalyze the sulfate conjugation of a variety of xenobiotic and endogenous compounds, including 2-naphthol, hydroxychlorobiphenyls, T3 (triiodo-L-thyronine), T4 (thyroxine), estrone and DOPA. This is Cytosolic sulfotransferase 2 from Danio rerio (Zebrafish).